A 122-amino-acid polypeptide reads, in one-letter code: Large ribosomal subunit protein uL14 (122 aa).

The protein belongs to the universal ribosomal protein uL14 family. Part of the 50S ribosomal subunit. Forms a cluster with proteins L3 and L19. In the 70S ribosome, L14 and L19 interact and together make contacts with the 16S rRNA in bridges B5 and B8.

Binds to 23S rRNA. Forms part of two intersubunit bridges in the 70S ribosome. In Nostoc punctiforme (strain ATCC 29133 / PCC 73102), this protein is Large ribosomal subunit protein uL14.